The sequence spans 352 residues: Small ribosomal subunit biogenesis GTPase RsgA (352 aa).

A CP-type G domain is found at 109–277 (DTVLKRPDMY…LIDSPGIREF (169 aa)). Residues 165–168 (NKAD) and 219–227 (GQSGVGKSS) each bind GTP. Positions 301, 306, 308, and 314 each coordinate Zn(2+).

Belongs to the TRAFAC class YlqF/YawG GTPase family. RsgA subfamily. Monomer. Associates with 30S ribosomal subunit, binds 16S rRNA. The cofactor is Zn(2+).

Its subcellular location is the cytoplasm. In terms of biological role, one of several proteins that assist in the late maturation steps of the functional core of the 30S ribosomal subunit. Helps release RbfA from mature subunits. May play a role in the assembly of ribosomal proteins into the subunit. Circularly permuted GTPase that catalyzes slow GTP hydrolysis, GTPase activity is stimulated by the 30S ribosomal subunit. The polypeptide is Small ribosomal subunit biogenesis GTPase RsgA (Alcanivorax borkumensis (strain ATCC 700651 / DSM 11573 / NCIMB 13689 / SK2)).